The following is a 687-amino-acid chain: Polyphosphate kinase (687 aa).

N45 lines the ATP pocket. Residues R375 and R405 each contribute to the Mg(2+) site. Residue H435 is the Phosphohistidine intermediate of the active site. ATP-binding residues include Y472, R568, and H596.

This sequence belongs to the polyphosphate kinase 1 (PPK1) family. It depends on Mg(2+) as a cofactor. In terms of processing, an intermediate of this reaction is the autophosphorylated ppk in which a phosphate is covalently linked to a histidine residue through a N-P bond.

It carries out the reaction [phosphate](n) + ATP = [phosphate](n+1) + ADP. Functionally, catalyzes the reversible transfer of the terminal phosphate of ATP to form a long-chain polyphosphate (polyP). This Burkholderia vietnamiensis (strain G4 / LMG 22486) (Burkholderia cepacia (strain R1808)) protein is Polyphosphate kinase.